Here is a 97-residue protein sequence, read N- to C-terminus: Small ribosomal subunit protein bS20 (97 aa).

It belongs to the bacterial ribosomal protein bS20 family.

Binds directly to 16S ribosomal RNA. In Prochlorococcus marinus (strain MIT 9215), this protein is Small ribosomal subunit protein bS20.